The chain runs to 96 residues: Small, acid-soluble spore protein gamma-type (96 aa).

The segment covering 1–15 has biased composition (polar residues); that stretch reads MNTKNFTPQESRTNA. Residues 1 to 96 are disordered; it reads MNTKNFTPQE…SEAKKRNNQQ (96 aa). Residues 16 to 27 are compositionally biased toward low complexity; the sequence is QQVRQQNQQSAQ. A compositionally biased stretch (polar residues) spans 28–41; sequence GTSSGFATEFASET. 2 consecutive repeats follow at residues 28 to 52 and 61 to 87; these read GTSS…QNQQ and GATA…NQQS. Composition is skewed to low complexity over residues 42-57 and 76-86; these read NAQQ…AQAN and NVQQVRQQNQQ.

The protein belongs to the gamma-type SASP family.

Functionally, SASP are proteins degraded in the first minutes of spore germination and provide amino acids for both new protein synthesis and metabolism. These proteins may be involved in dormant spore's high resistance to UV light. The polypeptide is Small, acid-soluble spore protein gamma-type (Laceyella sacchari (Thermoactinomyces thalpophilus)).